The following is a 482-amino-acid chain: tRNA sulfurtransferase (482 aa).

Residues 61 to 165 (NQVLTAVTHT…NEKLNLVIAR (105 aa)) enclose the THUMP domain. ATP contacts are provided by residues 183–184 (LI), Lys-265, Gly-287, and Gln-296. Cys-344 and Cys-456 form a disulfide bridge. Residues 404–482 (LGSDVVVLDI…GYKNVKVYRP (79 aa)) enclose the Rhodanese domain. Cys-456 serves as the catalytic Cysteine persulfide intermediate.

The protein belongs to the ThiI family.

The protein localises to the cytoplasm. It catalyses the reaction [ThiI sulfur-carrier protein]-S-sulfanyl-L-cysteine + a uridine in tRNA + 2 reduced [2Fe-2S]-[ferredoxin] + ATP + H(+) = [ThiI sulfur-carrier protein]-L-cysteine + a 4-thiouridine in tRNA + 2 oxidized [2Fe-2S]-[ferredoxin] + AMP + diphosphate. It carries out the reaction [ThiS sulfur-carrier protein]-C-terminal Gly-Gly-AMP + S-sulfanyl-L-cysteinyl-[cysteine desulfurase] + AH2 = [ThiS sulfur-carrier protein]-C-terminal-Gly-aminoethanethioate + L-cysteinyl-[cysteine desulfurase] + A + AMP + 2 H(+). It functions in the pathway cofactor biosynthesis; thiamine diphosphate biosynthesis. Catalyzes the ATP-dependent transfer of a sulfur to tRNA to produce 4-thiouridine in position 8 of tRNAs, which functions as a near-UV photosensor. Also catalyzes the transfer of sulfur to the sulfur carrier protein ThiS, forming ThiS-thiocarboxylate. This is a step in the synthesis of thiazole, in the thiamine biosynthesis pathway. The sulfur is donated as persulfide by IscS. The sequence is that of tRNA sulfurtransferase from Aliivibrio salmonicida (strain LFI1238) (Vibrio salmonicida (strain LFI1238)).